A 270-amino-acid chain; its full sequence is 4-diphosphocytidyl-2-C-methyl-D-erythritol kinase (270 aa).

Residue Lys8 is part of the active site. Residue 90-100 (PIGAGLGGGSS) participates in ATP binding. Asp132 is a catalytic residue.

It belongs to the GHMP kinase family. IspE subfamily.

It carries out the reaction 4-CDP-2-C-methyl-D-erythritol + ATP = 4-CDP-2-C-methyl-D-erythritol 2-phosphate + ADP + H(+). It participates in isoprenoid biosynthesis; isopentenyl diphosphate biosynthesis via DXP pathway; isopentenyl diphosphate from 1-deoxy-D-xylulose 5-phosphate: step 3/6. Functionally, catalyzes the phosphorylation of the position 2 hydroxy group of 4-diphosphocytidyl-2C-methyl-D-erythritol. The protein is 4-diphosphocytidyl-2-C-methyl-D-erythritol kinase of Cytophaga hutchinsonii (strain ATCC 33406 / DSM 1761 / CIP 103989 / NBRC 15051 / NCIMB 9469 / D465).